A 475-amino-acid polypeptide reads, in one-letter code: Bifunctional protein HldE (475 aa).

The ribokinase stretch occupies residues Met-1–Thr-318. ATP is bound at residue Asn-195–Glu-198. The active site involves Asp-264. A cytidylyltransferase region spans residues Met-344–Arg-475.

This sequence in the N-terminal section; belongs to the carbohydrate kinase PfkB family. The protein in the C-terminal section; belongs to the cytidylyltransferase family. As to quaternary structure, homodimer.

The enzyme catalyses D-glycero-beta-D-manno-heptose 7-phosphate + ATP = D-glycero-beta-D-manno-heptose 1,7-bisphosphate + ADP + H(+). The catalysed reaction is D-glycero-beta-D-manno-heptose 1-phosphate + ATP + H(+) = ADP-D-glycero-beta-D-manno-heptose + diphosphate. The protein operates within nucleotide-sugar biosynthesis; ADP-L-glycero-beta-D-manno-heptose biosynthesis; ADP-L-glycero-beta-D-manno-heptose from D-glycero-beta-D-manno-heptose 7-phosphate: step 1/4. It functions in the pathway nucleotide-sugar biosynthesis; ADP-L-glycero-beta-D-manno-heptose biosynthesis; ADP-L-glycero-beta-D-manno-heptose from D-glycero-beta-D-manno-heptose 7-phosphate: step 3/4. It participates in bacterial outer membrane biogenesis; LOS core biosynthesis. Its function is as follows. Catalyzes the phosphorylation of D-glycero-D-manno-heptose 7-phosphate at the C-1 position to selectively form D-glycero-beta-D-manno-heptose-1,7-bisphosphate. In terms of biological role, catalyzes the ADP transfer from ATP to D-glycero-beta-D-manno-heptose 1-phosphate, yielding ADP-D-glycero-beta-D-manno-heptose. The polypeptide is Bifunctional protein HldE (Haemophilus ducreyi (strain 35000HP / ATCC 700724)).